The following is a 205-amino-acid chain: SCO2-like protein RF_0960 (205 aa).

Cu cation-binding residues include cysteine 82, cysteine 86, and histidine 172.

Belongs to the SCO1/2 family.

The protein is SCO2-like protein RF_0960 of Rickettsia felis (strain ATCC VR-1525 / URRWXCal2) (Rickettsia azadi).